The sequence spans 487 residues: Probable cytochrome P450 513B1 (487 aa).

The helical transmembrane segment at 1–18 (MNLLVLSVILAIIIYLIF) threads the bilayer. Cys-433 is a binding site for heme.

Belongs to the cytochrome P450 family. It depends on heme as a cofactor.

It is found in the membrane. This chain is Probable cytochrome P450 513B1 (cyp513B1), found in Dictyostelium discoideum (Social amoeba).